A 424-amino-acid polypeptide reads, in one-letter code: UPF0597 protein Shewana3_2972 (424 aa).

This sequence belongs to the UPF0597 family.

The chain is UPF0597 protein Shewana3_2972 from Shewanella sp. (strain ANA-3).